The following is a 309-amino-acid chain: DnaJ protein ERDJ7 (309 aa).

Residues 1–36 form the signal peptide; the sequence is MSQVGSAGEGSNSMAAAPPPRLLLLVVLLLVPVSNA. The Lumenal segment spans residues 37–130; sequence IYCEEDDCYD…YRAYYGHKTD (94 aa). A J domain is found at 43-107; the sequence is DCYDLLGVKQ…STRGQYDYAI (65 aa). An N-linked (GlcNAc...) asparagine glycan is attached at N55. The helical transmembrane segment at 131-151 threads the bilayer; it reads PRAVLIGLLLIISAFQYLNQF. At 152-219 the chain is on the cytoplasmic side; the sequence is GRYSKAIETV…GVEKPSLWRL (68 aa). Residues 220–242 traverse the membrane as a helical segment; it reads YGVQFILLPYSIGKVLSWKFCWF. Residues 243–309 are Lumenal-facing; it reads WRYRIKKLPY…EMRKESKRRR (67 aa).

The protein localises to the endoplasmic reticulum membrane. Its function is as follows. May play a role in protein folding in the endoplasmic reticulum. The polypeptide is DnaJ protein ERDJ7 (Oryza sativa subsp. japonica (Rice)).